Reading from the N-terminus, the 363-residue chain is UDP-3-O-acylglucosamine N-acyltransferase (363 aa).

The active-site Proton acceptor is the histidine 252.

This sequence belongs to the transferase hexapeptide repeat family. LpxD subfamily. In terms of assembly, homotrimer.

It catalyses the reaction a UDP-3-O-[(3R)-3-hydroxyacyl]-alpha-D-glucosamine + a (3R)-hydroxyacyl-[ACP] = a UDP-2-N,3-O-bis[(3R)-3-hydroxyacyl]-alpha-D-glucosamine + holo-[ACP] + H(+). It functions in the pathway bacterial outer membrane biogenesis; LPS lipid A biosynthesis. Catalyzes the N-acylation of UDP-3-O-acylglucosamine using 3-hydroxyacyl-ACP as the acyl donor. Is involved in the biosynthesis of lipid A, a phosphorylated glycolipid that anchors the lipopolysaccharide to the outer membrane of the cell. The polypeptide is UDP-3-O-acylglucosamine N-acyltransferase (Cupriavidus taiwanensis (strain DSM 17343 / BCRC 17206 / CCUG 44338 / CIP 107171 / LMG 19424 / R1) (Ralstonia taiwanensis (strain LMG 19424))).